Consider the following 347-residue polypeptide: UDP-galactose/UDP-glucose transporter 5 (347 aa).

The next 8 helical transmembrane spans lie at 17–37, 57–77, 116–136, 143–163, 177–197, 218–238, 247–267, and 293–313; these read LWKAVFAISGIMLTLVIYGLL, LFLVFCNRLTTSAVSAAALLA, VQTLAKCAKMIPVMVWGTLIM, FDYLVAFLVTLGCSVFILFPA, TVWGVSLMVGYLGFDGFTSTF, ICSSILSFTGLILQGHLLPAV, CLFDIALLSTVATASQFFISY, and CIWFSHPLSWEQCIGSVIVFG. Residues 325–347 form a disordered region; that stretch reads SEKPPAAQELPRDEEAQPLKGNP.

This sequence belongs to the nucleotide-sugar transporter family. UDP-galactose:UMP antiporter (TC 2.A.7.11) subfamily.

It localises to the membrane. Its function is as follows. Sugar transporter involved in the transport of nucleotide-sugars from cytoplasm into the Golgi and/or the endoplasmic reticulum. This is UDP-galactose/UDP-glucose transporter 5 from Arabidopsis thaliana (Mouse-ear cress).